Consider the following 283-residue polypeptide: NFU1 iron-sulfur cluster scaffold homolog, mitochondrial (283 aa).

The transit peptide at 1-30 directs the protein to the mitochondrion; that stretch reads MSKFLSQAALNTLRNTRLGSRQLVRSFAGI. The nifU stretch occupies residues 182–250; it reads IKELLDTRIR…IPEVESVEQV (69 aa). [4Fe-4S] cluster is bound by residues Cys219 and Cys222.

This sequence belongs to the NifU family.

The protein resides in the mitochondrion. Its function is as follows. Molecular scaffold for [Fe-S] cluster assembly of mitochondrial iron-sulfur proteins. The sequence is that of NFU1 iron-sulfur cluster scaffold homolog, mitochondrial from Drosophila yakuba (Fruit fly).